We begin with the raw amino-acid sequence, 474 residues long: MNFKFVAGLEIHVQLNTKTKMFCSCPTEGPDIPNTRVCPVCLGYPGTLPVLNREAVVMAIALGKALHGHINNISRFHRKNYFYPDLPKGYQITQGDVPIIENAYLELSTGKKIPIKRIHLEEDAAKSVHVSSTGRLSGAEETLLDFNRSGIPLIEIVTDPVFESPEEAALFVEELQATLRYLGISNAQMELGQLRCDVNVSVELDGKEGTRVEIKNLNSIRAIRQALSYEYNRHVDAYKRGEIIPQETLAFDEKTNQTPPMRTKQTSEDYRYFPEPDLPPLVLTSDLFEEADKYSGSFLEAYKNALQWIGKESEARTLALNKDQYLMYATFAKEGFDTKLLTRIITIDLPNILSEVGKGWNEINQSYISAILNLQQRGEITAAVAKDLLWQAARDIDPIKYAQEHQLLGKKDLDLEQVISEVLEQNPDAVEKYKKGNVNVVSFLLGQVMKKTKGTADPGETRKLLEERLTKLSE.

Belongs to the GatB/GatE family. GatB subfamily. Heterotrimer of A, B and C subunits.

It carries out the reaction L-glutamyl-tRNA(Gln) + L-glutamine + ATP + H2O = L-glutaminyl-tRNA(Gln) + L-glutamate + ADP + phosphate + H(+). The enzyme catalyses L-aspartyl-tRNA(Asn) + L-glutamine + ATP + H2O = L-asparaginyl-tRNA(Asn) + L-glutamate + ADP + phosphate + 2 H(+). Functionally, allows the formation of correctly charged Asn-tRNA(Asn) or Gln-tRNA(Gln) through the transamidation of misacylated Asp-tRNA(Asn) or Glu-tRNA(Gln) in organisms which lack either or both of asparaginyl-tRNA or glutaminyl-tRNA synthetases. The reaction takes place in the presence of glutamine and ATP through an activated phospho-Asp-tRNA(Asn) or phospho-Glu-tRNA(Gln). The protein is Aspartyl/glutamyl-tRNA(Asn/Gln) amidotransferase subunit B of Coprothermobacter proteolyticus (strain ATCC 35245 / DSM 5265 / OCM 4 / BT).